Here is a 279-residue protein sequence, read N- to C-terminus: Fatty acid desaturase 4-like 2, chloroplastic (279 aa).

The N-terminal 30 residues, 1-30, are a transit peptide targeting the chloroplast; it reads MATSLQTKYTLNPITNNIPRSHRPSFLRVT. 3 helical membrane-spanning segments follow: residues 68 to 90, 98 to 118, and 178 to 198; these read LWVA…GAFG, SLAG…YHWA, and VVHG…LFHA.

Belongs to the fatty acid desaturase CarF family.

The protein localises to the plastid. It is found in the chloroplast membrane. The protein operates within lipid metabolism; fatty acid metabolism. In terms of biological role, fatty acid desaturase involved in the production of chloroplast-specific phosphatidylglycerol molecular species. Catalyzes the formation of a trans double bond introduced close to the carboxyl group of palmitic acid, which is specifically esterified to the sn-2 glyceryl carbon of phosphatidylglycerol. This chain is Fatty acid desaturase 4-like 2, chloroplastic (FAD4L2), found in Arabidopsis thaliana (Mouse-ear cress).